The sequence spans 287 residues: Leucine-rich repeat-containing protein 72 (287 aa).

LRR repeat units follow at residues 46–67, 68–89, 90–111, and 112–133; these read DVFE…SRFK, KLKY…TRNY, CLTE…HYLP, and SLHI…VKEL. The 39-residue stretch at 147–185 folds into the LRRCT domain; it reads NPLCQYNLYRLYIIYHLPGVELLDRNQVTEKERRSMITI.

This Homo sapiens (Human) protein is Leucine-rich repeat-containing protein 72 (LRRC72).